A 338-amino-acid polypeptide reads, in one-letter code: Acyl-CoA Delta(11) desaturase (338 aa).

A run of 2 helical transmembrane segments spans residues 33–53 and 61–81; these read IVYF…YGLY and WATV…VTAG. Positions 83-88 match the Histidine box-1 motif; the sequence is HRLWSH. Residues 97–117 traverse the membrane as a helical segment; the sequence is LQILLMVMNSLAFQNTVIDWV. Residues 120–124 carry the Histidine box-2 motif; that stretch reads HRLHH. Helical transmembrane passes span 181–201 and 212–234; these read AIPF…VYGW and AMLR…HIYG. Residues 260–264 carry the Histidine box-3 motif; that stretch reads HNYHH. The interval 318–338 is disordered; sequence TNLWGLEDVDTPEDLKNTKGE.

Belongs to the fatty acid desaturase type 1 family. Fe cation is required as a cofactor. Detected in the pheromone gland.

It localises to the membrane. The catalysed reaction is an 11,12-saturated fatty acyl-CoA + 2 Fe(II)-[cytochrome b5] + O2 + 2 H(+) = an (11Z)-Delta(11)-fatty acyl-CoA + 2 Fe(III)-[cytochrome b5] + 2 H2O. Catalyzes the formation of delta(11) fatty acyl precursors in the pheromone gland, and has high activity towards palmitic acid and stearic acid. The polypeptide is Acyl-CoA Delta(11) desaturase (Spodoptera littoralis (Egyptian cotton leafworm)).